The primary structure comprises 232 residues: MSIVNSIRAQIPPIHREGYPFIGGFALISLLLFWLWTPLGWIGVVLTIWCALFFRDPVRVTPVRDDLVVAPADGRVSMVVSMVPPAELGLGDKPLLRISIFMSVFNCHVNRAPVAGRVERIVYSPGKFINADLDKASEDNERNSMVISTPGGQIGVIQIAGLVARRIVSFVRVGQVLGAGERFGLIRFGSRLDVYLPDGAKALVSPGQTSIAGETVLADFRQGDGGRSYRAA.

The active-site Schiff-base intermediate with substrate; via pyruvic acid is serine 190. Serine 190 carries the pyruvic acid (Ser); by autocatalysis modification.

The protein belongs to the phosphatidylserine decarboxylase family. PSD-A subfamily. Heterodimer of a large membrane-associated beta subunit and a small pyruvoyl-containing alpha subunit. Pyruvate serves as cofactor. In terms of processing, is synthesized initially as an inactive proenzyme. Formation of the active enzyme involves a self-maturation process in which the active site pyruvoyl group is generated from an internal serine residue via an autocatalytic post-translational modification. Two non-identical subunits are generated from the proenzyme in this reaction, and the pyruvate is formed at the N-terminus of the alpha chain, which is derived from the carboxyl end of the proenzyme. The post-translation cleavage follows an unusual pathway, termed non-hydrolytic serinolysis, in which the side chain hydroxyl group of the serine supplies its oxygen atom to form the C-terminus of the beta chain, while the remainder of the serine residue undergoes an oxidative deamination to produce ammonia and the pyruvoyl prosthetic group on the alpha chain.

The protein resides in the cell membrane. The catalysed reaction is a 1,2-diacyl-sn-glycero-3-phospho-L-serine + H(+) = a 1,2-diacyl-sn-glycero-3-phosphoethanolamine + CO2. The protein operates within phospholipid metabolism; phosphatidylethanolamine biosynthesis; phosphatidylethanolamine from CDP-diacylglycerol: step 2/2. In terms of biological role, catalyzes the formation of phosphatidylethanolamine (PtdEtn) from phosphatidylserine (PtdSer). This Rhodopseudomonas palustris (strain BisB18) protein is Phosphatidylserine decarboxylase proenzyme.